The chain runs to 97 residues: Putative pterin-4-alpha-carbinolamine dehydratase (97 aa).

Belongs to the pterin-4-alpha-carbinolamine dehydratase family.

It carries out the reaction (4aS,6R)-4a-hydroxy-L-erythro-5,6,7,8-tetrahydrobiopterin = (6R)-L-erythro-6,7-dihydrobiopterin + H2O. This is Putative pterin-4-alpha-carbinolamine dehydratase from Brucella abortus (strain S19).